The chain runs to 158 residues: Transcription elongation factor GreA (158 aa).

A coiled-coil region spans residues 47–74 (AEYHAAKEEQSHNEGRIAELEDKLARAD).

It belongs to the GreA/GreB family.

In terms of biological role, necessary for efficient RNA polymerase transcription elongation past template-encoded arresting sites. The arresting sites in DNA have the property of trapping a certain fraction of elongating RNA polymerases that pass through, resulting in locked ternary complexes. Cleavage of the nascent transcript by cleavage factors such as GreA or GreB allows the resumption of elongation from the new 3'terminus. GreA releases sequences of 2 to 3 nucleotides. This Nitrobacter winogradskyi (strain ATCC 25391 / DSM 10237 / CIP 104748 / NCIMB 11846 / Nb-255) protein is Transcription elongation factor GreA.